A 626-amino-acid polypeptide reads, in one-letter code: Methanol dehydrogenase [cytochrome c] subunit 1 (626 aa).

The signal sequence occupies residues 1–27 (MSRFVTSVSALAMLALAPAALSSVAYA). Residues Cys130 and Cys131 are joined by a disulfide bond. 2 residues coordinate Ca(2+): Glu204 and Asn288. The active-site Proton acceptor is Asp330. Cys413 and Cys442 are joined by a disulfide.

The protein belongs to the bacterial PQQ dehydrogenase family. In terms of assembly, heterotetramer composed of 2 alpha and 2 beta subunits. Requires pyrroloquinoline quinone as cofactor. Ca(2+) serves as cofactor.

It is found in the cell inner membrane. It carries out the reaction 2 Fe(III)-[cytochrome cL] + a primary alcohol = 2 Fe(II)-[cytochrome cL] + an aldehyde + 2 H(+). Catalyzes the oxidation of primary alcohols including methanol. This chain is Methanol dehydrogenase [cytochrome c] subunit 1 (moxF), found in Methylobacterium organophilum.